The following is a 455-amino-acid chain: DNA N(6)-methyladenine demethylase ALKBH1C (455 aa).

Disordered stretches follow at residues 1-114 (MNHS…AGDN) and 173-194 (SSVE…SNES). A Fe2OG dioxygenase domain is found at 345–455 (LPDICIVNFY…GRLNLTFRQY (111 aa)). 352 to 354 (NFY) contacts 2-oxoglutarate. Fe cation contacts are provided by histidine 363, aspartate 365, and histidine 423. 447–453 (RLNLTFR) contributes to the 2-oxoglutarate binding site.

It belongs to the alkB family. Requires Fe(2+) as cofactor. As to expression, expressed at low levels in roots and seedlings, but barely in cauline leaves, rosette leaves, stems, siliques and flowers.

It localises to the nucleus. It is found in the cytoplasm. The enzyme catalyses an N(6)-methyl-2'-deoxyadenosine in DNA + 2-oxoglutarate + O2 = a 2'-deoxyadenosine in DNA + formaldehyde + succinate + CO2. Its function is as follows. Dioxygenase that catalyzes DNA N(6)-methyladenine (6 mA) demethylation with a low efficiency. The polypeptide is DNA N(6)-methyladenine demethylase ALKBH1C (Arabidopsis thaliana (Mouse-ear cress)).